The sequence spans 346 residues: Probable RNA methyltransferase PSPA7_3453 (346 aa).

Glu91 functions as the Proton acceptor in the catalytic mechanism. Residues 94 to 320 (LLPRGGLCVS…TKVRNSAGQD (227 aa)) form the Radical SAM core domain. Cys101 and Cys325 form a disulfide bridge. [4Fe-4S] cluster is bound by residues Cys108, Cys112, and Cys115. S-adenosyl-L-methionine-binding positions include 153–154 (GE), Ser183, 206–208 (SLH), and Asn282. Cys325 acts as the S-methylcysteine intermediate in catalysis.

This sequence belongs to the radical SAM superfamily. RlmN family. Requires [4Fe-4S] cluster as cofactor.

The protein resides in the cytoplasm. This is Probable RNA methyltransferase PSPA7_3453 from Pseudomonas paraeruginosa (strain DSM 24068 / PA7) (Pseudomonas aeruginosa (strain PA7)).